Consider the following 237-residue polypeptide: uncharacterized protein (237 aa).

Residues 53 to 70 traverse the membrane as a helical segment; that stretch reads LIFLATVLAGLILFYFGV. Residues 85-155 form a disordered region; sequence PPIVIKPVAP…TQEKKDVKVA (71 aa). A coiled-coil region spans residues 98–157; sequence KTQESNQTTKKEVKQEEQKKEEPKKMVQKQETQEKREVKKSEKNEVKQTQEKKDVKVAKK. 2 stretches are compositionally biased toward basic and acidic residues: residues 106-122 and 128-155; these read TKKEVKQEEQKKEEPKK and ETQEKREVKKSEKNEVKQTQEKKDVKVA. Residues 165–237 form the SPOR domain; sequence AANLRTYKFQ…HFKDAIFVRK (73 aa).

It localises to the membrane. This is an uncharacterized protein from Aquifex aeolicus (strain VF5).